Reading from the N-terminus, the 125-residue chain is Small ribosomal subunit protein uS12 (125 aa).

Residues 1 to 28 are disordered; the sequence is MPTINQLVRKGREKVKKKSKAPALEGNP. Basic residues predominate over residues 9–20; the sequence is RKGREKVKKKSK. Residue Asp89 is modified to 3-methylthioaspartic acid. The disordered stretch occupies residues 104 to 125; it reads AAGVKDRKQSRSKYGTKRPKEK. Residues 113-125 show a composition bias toward basic residues; sequence SRSKYGTKRPKEK.

This sequence belongs to the universal ribosomal protein uS12 family. In terms of assembly, part of the 30S ribosomal subunit. Contacts proteins S8 and S17. May interact with IF1 in the 30S initiation complex.

With S4 and S5 plays an important role in translational accuracy. Its function is as follows. Interacts with and stabilizes bases of the 16S rRNA that are involved in tRNA selection in the A site and with the mRNA backbone. Located at the interface of the 30S and 50S subunits, it traverses the body of the 30S subunit contacting proteins on the other side and probably holding the rRNA structure together. The combined cluster of proteins S8, S12 and S17 appears to hold together the shoulder and platform of the 30S subunit. The chain is Small ribosomal subunit protein uS12 from Persephonella marina (strain DSM 14350 / EX-H1).